Reading from the N-terminus, the 363-residue chain is MASSASKTNIGVFTNPQHDLWISEASPSLESVQKGEELKEGEVTVAVRSTGICGSDVHFWKHGCIGPMIVECDHVLGHESAGEVIAVHPSVKSIKVGDRVAIEPQVICNACEPCLTGRYNGCERVDFLSTPPVPGLLRRYVNHPAVWCHKIGNMSYENGAMLEPLSVALAGLQRAGVRLGDPVLICGAGPIGLITMLCAKAAGACPLVITDIDEGRLKFAKEICPEVVTHKVERLSAEESAKKIVESFGGIEPAVALECTGVESSIAAAIWAVKFGGKVFVIGVGKNEIQIPFMRASVREVDLQFQYRYCNTWPRAIRLVENGLVDLTRLVTHRFPLEDALKAFETASDPKTGAIKVQIQSLE.

Residues Cys-53, His-78, Glu-79, Cys-108, Cys-111, Cys-114, Cys-122, and Glu-163 each contribute to the Zn(2+) site. NAD(+)-binding positions include 190–191 (PI), Asp-211, Arg-216, Ile-282, and 306–308 (QYR).

It belongs to the zinc-containing alcohol dehydrogenase family. As to quaternary structure, homotetramer. It depends on Zn(2+) as a cofactor.

It catalyses the reaction L-arabinitol + NAD(+) = L-xylulose + NADH + H(+). It functions in the pathway carbohydrate degradation; L-arabinose degradation via L-arabinitol; D-xylulose 5-phosphate from L-arabinose (fungal route): step 2/5. Catalyzes the NAD-dependent oxidation of L-arabinitol to L-xylulose in the fungal L-arabinose catabolic pathway. L-arabinose catabolism is important for using plant material as a carbon source. Not active on D-arabinitol, D-sorbitol and D-mannitol. The protein is L-arabinitol 4-dehydrogenase (ard-1) of Neurospora crassa (strain ATCC 24698 / 74-OR23-1A / CBS 708.71 / DSM 1257 / FGSC 987).